A 416-amino-acid chain; its full sequence is Putative UV-damage repair protein UvrX (416 aa).

Residues 12–196 (ILCVDMKSFY…RPLSKMWGIG (185 aa)) enclose the UmuC domain. The Mg(2+) site is built by Asp16 and Asp115. Residue Glu116 is part of the active site.

It belongs to the DNA polymerase type-Y family. It depends on Mg(2+) as a cofactor.

This is Putative UV-damage repair protein UvrX (uvrX) from Bacillus subtilis (strain 168).